The following is a 291-amino-acid chain: Urease accessory protein UreD (291 aa).

Belongs to the UreD family. As to quaternary structure, ureD, UreF and UreG form a complex that acts as a GTP-hydrolysis-dependent molecular chaperone, activating the urease apoprotein by helping to assemble the nickel containing metallocenter of UreC. The UreE protein probably delivers the nickel.

The protein localises to the cytoplasm. In terms of biological role, required for maturation of urease via the functional incorporation of the urease nickel metallocenter. The protein is Urease accessory protein UreD of Acinetobacter baumannii (strain SDF).